A 290-amino-acid chain; its full sequence is MIQGSMVALVTPMHADNTLDWDSLHKLVDWHLEQGTHAIVAVGTTGESATLDVQEHLQVIKRVVDQVNGRIPVIAGTGANSTSEAVELTQAAKDVGADACLLVTPYYNKPTQEGLFLHHEYIANAVAIPQYLYNVPGRTGVDMKPETALRLAQVPNIAGIKEATGDLERARLLIDQAPPGFAIISGDDATAVELILLGGQGDISVTANVVPAAIARMCELALAGKAEEARTINTQLLPLHTAMFVESNPIPVKWAVEQLGLIQSGIRLPLTRLSAQYHQQVKTAMQLAGL.

Residue Thr45 participates in pyruvate binding. Tyr133 serves as the catalytic Proton donor/acceptor. The Schiff-base intermediate with substrate role is filled by Lys161. Ile203 lines the pyruvate pocket.

Belongs to the DapA family. In terms of assembly, homotetramer; dimer of dimers.

The protein resides in the cytoplasm. The enzyme catalyses L-aspartate 4-semialdehyde + pyruvate = (2S,4S)-4-hydroxy-2,3,4,5-tetrahydrodipicolinate + H2O + H(+). The protein operates within amino-acid biosynthesis; L-lysine biosynthesis via DAP pathway; (S)-tetrahydrodipicolinate from L-aspartate: step 3/4. In terms of biological role, catalyzes the condensation of (S)-aspartate-beta-semialdehyde [(S)-ASA] and pyruvate to 4-hydroxy-tetrahydrodipicolinate (HTPA). This Cellvibrio japonicus (strain Ueda107) (Pseudomonas fluorescens subsp. cellulosa) protein is 4-hydroxy-tetrahydrodipicolinate synthase.